We begin with the raw amino-acid sequence, 630 residues long: 1-deoxy-D-xylulose-5-phosphate synthase (630 aa).

Thiamine diphosphate contacts are provided by residues His-87 and 128-130 (GHS). Asp-159 serves as a coordination point for Mg(2+). Thiamine diphosphate is bound by residues 160–161 (GA), Asn-188, Phe-295, and Glu-377. A Mg(2+)-binding site is contributed by Asn-188.

Belongs to the transketolase family. DXPS subfamily. As to quaternary structure, homodimer. The cofactor is Mg(2+). Thiamine diphosphate is required as a cofactor.

It catalyses the reaction D-glyceraldehyde 3-phosphate + pyruvate + H(+) = 1-deoxy-D-xylulose 5-phosphate + CO2. It functions in the pathway metabolic intermediate biosynthesis; 1-deoxy-D-xylulose 5-phosphate biosynthesis; 1-deoxy-D-xylulose 5-phosphate from D-glyceraldehyde 3-phosphate and pyruvate: step 1/1. In terms of biological role, catalyzes the acyloin condensation reaction between C atoms 2 and 3 of pyruvate and glyceraldehyde 3-phosphate to yield 1-deoxy-D-xylulose-5-phosphate (DXP). The chain is 1-deoxy-D-xylulose-5-phosphate synthase from Pseudomonas savastanoi pv. phaseolicola (strain 1448A / Race 6) (Pseudomonas syringae pv. phaseolicola (strain 1448A / Race 6)).